We begin with the raw amino-acid sequence, 428 residues long: Glutamate-1-semialdehyde 2,1-aminomutase 1 (428 aa).

An N6-(pyridoxal phosphate)lysine modification is found at Lys-268.

It belongs to the class-III pyridoxal-phosphate-dependent aminotransferase family. HemL subfamily. In terms of assembly, homodimer. Requires pyridoxal 5'-phosphate as cofactor.

The protein resides in the cytoplasm. It catalyses the reaction (S)-4-amino-5-oxopentanoate = 5-aminolevulinate. The protein operates within porphyrin-containing compound metabolism; protoporphyrin-IX biosynthesis; 5-aminolevulinate from L-glutamyl-tRNA(Glu): step 2/2. The chain is Glutamate-1-semialdehyde 2,1-aminomutase 1 from Geobacillus kaustophilus (strain HTA426).